A 145-amino-acid chain; its full sequence is UPF0201 protein Saci_1285 (145 aa).

Belongs to the UPF0201 family.

The polypeptide is UPF0201 protein Saci_1285 (Sulfolobus acidocaldarius (strain ATCC 33909 / DSM 639 / JCM 8929 / NBRC 15157 / NCIMB 11770)).